A 416-amino-acid polypeptide reads, in one-letter code: Probable sarcosine oxidase (416 aa).

FAD is bound at residue 10–40 (DVIVVGAGVMGSSAAYQLAKRGQKTLLLEQF). Cys325 is subject to S-8alpha-FAD cysteine.

This sequence belongs to the MSOX/MTOX family. Requires FAD as cofactor.

The enzyme catalyses sarcosine + O2 + H2O = formaldehyde + glycine + H2O2. The sequence is that of Probable sarcosine oxidase from Arabidopsis thaliana (Mouse-ear cress).